A 161-amino-acid polypeptide reads, in one-letter code: Phosphopantetheine adenylyltransferase (161 aa).

Thr10 contributes to the substrate binding site. Residues 10 to 11 and His18 each bind ATP; that span reads TF. Residues Lys42, Leu74, and Arg88 each coordinate substrate. ATP contacts are provided by residues 89-91, Glu99, and 124-130; these read GLR and NSFISST.

It belongs to the bacterial CoaD family. Homohexamer. Mg(2+) serves as cofactor.

The protein localises to the cytoplasm. The enzyme catalyses (R)-4'-phosphopantetheine + ATP + H(+) = 3'-dephospho-CoA + diphosphate. The protein operates within cofactor biosynthesis; coenzyme A biosynthesis; CoA from (R)-pantothenate: step 4/5. Its function is as follows. Reversibly transfers an adenylyl group from ATP to 4'-phosphopantetheine, yielding dephospho-CoA (dPCoA) and pyrophosphate. The polypeptide is Phosphopantetheine adenylyltransferase (Photobacterium profundum (strain SS9)).